An 80-amino-acid chain; its full sequence is Iota-conotoxin-like r11c (80 aa).

Positions 1 to 19 (MKLCLTFLLVLMILASVTG) are cleaved as a signal peptide. Positions 20–35 (EKSSKHTLSRAARVKN) are excised as a propeptide. 4-hydroxyproline; partial occurs at positions 38 and 47. 4 disulfides stabilise this stretch: cysteine 41–cysteine 55, cysteine 48–cysteine 58, cysteine 54–cysteine 63, and cysteine 57–cysteine 72. Residue proline 65 is modified to 4-hydroxyproline. The residue at position 78 (leucine 78) is a D-leucine. Residue arginine 80 is a propeptide, removed by a carboxypeptidase.

The natural D-Leu form of the peptide is more potent than the synthetic L-Leu form. In terms of tissue distribution, expressed by the venom duct.

Its subcellular location is the secreted. Iota-conotoxins bind to voltage-gated sodium channels (Nav) and act as agonists by shifting the voltage-dependence of activation to more hyperpolarized levels. Causes circular motion, convulsions, copious urination, rigid paralysis and death upon intracranial injection into mice. Causes unbalanced swimming, swimming in diagonal and vertical motion and death, when injected intraperitoneally into goldfish. L-Leu and D-Leu forms are active on both nerve and muscle. In Conus radiatus (Rayed cone), this protein is Iota-conotoxin-like r11c.